The sequence spans 590 residues: Threonine dehydratase biosynthetic, chloroplastic (590 aa).

A chloroplast-targeting transit peptide spans 1–44 (MLSTSTTNSSILPFRSRASSSTFIARPPANFNSIFTTSVRVFPI). At Lys-139 the chain carries N6-(pyridoxal phosphate)lysine. 2 ACT-like domains span residues 416–488 (ALLG…NISH) and 509–580 (EVFV…IDQY).

Belongs to the serine/threonine dehydratase family. The cofactor is pyridoxal 5'-phosphate. As to expression, found at higher levels in flowers than in other organs.

Its subcellular location is the plastid. It localises to the chloroplast. The catalysed reaction is L-threonine = 2-oxobutanoate + NH4(+). It functions in the pathway amino-acid biosynthesis; L-isoleucine biosynthesis; 2-oxobutanoate from L-threonine: step 1/1. With respect to regulation, allosterically inhibited by isoleucine. The polypeptide is Threonine dehydratase biosynthetic, chloroplastic (Cicer arietinum (Chickpea)).